The sequence spans 105 residues: Large ribosomal subunit protein eL42z/eL42y (105 aa).

Residues tyrosine 28–valine 57 form a disordered region.

This sequence belongs to the eukaryotic ribosomal protein eL42 family.

This Arabidopsis thaliana (Mouse-ear cress) protein is Large ribosomal subunit protein eL42z/eL42y (RPL36AA).